Reading from the N-terminus, the 110-residue chain is Large ribosomal subunit protein uL22 (110 aa).

It belongs to the universal ribosomal protein uL22 family. As to quaternary structure, part of the 50S ribosomal subunit.

Its function is as follows. This protein binds specifically to 23S rRNA; its binding is stimulated by other ribosomal proteins, e.g. L4, L17, and L20. It is important during the early stages of 50S assembly. It makes multiple contacts with different domains of the 23S rRNA in the assembled 50S subunit and ribosome. The globular domain of the protein is located near the polypeptide exit tunnel on the outside of the subunit, while an extended beta-hairpin is found that lines the wall of the exit tunnel in the center of the 70S ribosome. This chain is Large ribosomal subunit protein uL22, found in Acidovorax ebreus (strain TPSY) (Diaphorobacter sp. (strain TPSY)).